Consider the following 227-residue polypeptide: Transmembrane emp24 domain-containing protein 4 (227 aa).

A signal peptide spans 1–29 (MAGVGVGPLQGMVRFGLLVLTVCAACARG). Topologically, residues 30–194 (LYFHIGETEK…RLTSESTNQR (165 aa)) are lumenal. In terms of domain architecture, GOLD spans 39–137 (KRCFIEEIPD…KLRVHLDIQV (99 aa)). Asparagine 117 is a glycosylation site (N-linked (GlcNAc...) asparagine). Positions 147–176 (IAAKDKLTELQLRARQLLDQVEQIQKEQDY) form a coiled coil. The chain crosses the membrane as a helical span at residues 195 to 212 (VLWWSIAQTVILILTGIW). Over 213–227 (QMRHLKSFFEAKKLV) the chain is Cytoplasmic. The COPII vesicle coat-binding signature appears at 220 to 221 (FF). The short motif at 220–227 (FFEAKKLV) is the COPI vesicle coat-binding element.

The protein belongs to the EMP24/GP25L family.

The protein resides in the endoplasmic reticulum membrane. Its function is as follows. Involved in vesicular protein trafficking, mainly in the early secretory pathway. Involved in the maintenance of the Golgi apparatus. Appears to play a role in the biosynthesis of secreted cargo including processing. Involved in endoplasmic reticulum stress response. May play a role in the regulation of heat-shock response and apoptosis. In Mus musculus (Mouse), this protein is Transmembrane emp24 domain-containing protein 4 (Tmed4).